Consider the following 73-residue polypeptide: uncharacterized protein (73 aa).

This is an uncharacterized protein from Autographa californica nuclear polyhedrosis virus (AcMNPV).